Here is a 291-residue protein sequence, read N- to C-terminus: Bifunctional protein FolD (291 aa).

Residues 171 to 173 (GVS) and Ile239 each bind NADP(+).

This sequence belongs to the tetrahydrofolate dehydrogenase/cyclohydrolase family. Homodimer.

The enzyme catalyses (6R)-5,10-methylene-5,6,7,8-tetrahydrofolate + NADP(+) = (6R)-5,10-methenyltetrahydrofolate + NADPH. The catalysed reaction is (6R)-5,10-methenyltetrahydrofolate + H2O = (6R)-10-formyltetrahydrofolate + H(+). It functions in the pathway one-carbon metabolism; tetrahydrofolate interconversion. In terms of biological role, catalyzes the oxidation of 5,10-methylenetetrahydrofolate to 5,10-methenyltetrahydrofolate and then the hydrolysis of 5,10-methenyltetrahydrofolate to 10-formyltetrahydrofolate. This Xylella fastidiosa (strain Temecula1 / ATCC 700964) protein is Bifunctional protein FolD.